Consider the following 684-residue polypeptide: Phenoloxidase 2 (684 aa).

Positions 1–50 (MADKKNLLLLFDHPTEPVFMDKGKRVTVFDVPDSFLTDRYRPISNEVQSR) are excised as a propeptide. Residues H208, H212, and H238 each coordinate Cu cation. E350 acts as the Proton acceptor in catalysis. H365, H369, and H405 together coordinate Cu cation. N-linked (GlcNAc...) asparagine glycosylation is found at N448 and N492. Disulfide bonds link C581/C623 and C583/C630. N665 and N677 each carry an N-linked (GlcNAc...) asparagine glycan.

This sequence belongs to the tyrosinase family. It depends on Cu(2+) as a cofactor. Upon activation, a trypsin type protease cleaves prophenol oxidase to yield the active enzyme.

The protein localises to the secreted. It catalyses the reaction 2 L-dopa + O2 = 2 L-dopaquinone + 2 H2O. The catalysed reaction is L-tyrosine + O2 = L-dopaquinone + H2O. This is a copper-containing oxidase that functions in the formation of pigments such as melanins and other polyphenolic compounds. Catalyzes the rate-limiting conversions of tyrosine to DOPA, DOPA to DOPA-quinone and possibly 5,6 dihydroxyindole to indole-5'6 quinonee. The polypeptide is Phenoloxidase 2 (PPO2) (Drosophila melanogaster (Fruit fly)).